We begin with the raw amino-acid sequence, 321 residues long: Ferredoxin--NADP reductase (321 aa).

FAD contacts are provided by D28, Q36, Y41, A81, F115, D274, and S315.

The protein belongs to the ferredoxin--NADP reductase type 2 family. Homodimer. FAD is required as a cofactor.

It carries out the reaction 2 reduced [2Fe-2S]-[ferredoxin] + NADP(+) + H(+) = 2 oxidized [2Fe-2S]-[ferredoxin] + NADPH. This chain is Ferredoxin--NADP reductase, found in Frankia alni (strain DSM 45986 / CECT 9034 / ACN14a).